The primary structure comprises 713 residues: Low-density lipoprotein receptor-related protein 10 (713 aa).

The signal sequence occupies residues 1–16 (MLLATLLLLLLGGALA). The Extracellular segment spans residues 17–440 (HPDRIIFPNH…WDCSYVLPRK (424 aa)). 2 cysteine pairs are disulfide-bonded: C28/C57 and C80/C98. The CUB 1 domain maps to 28–136 (CEDPPAVLLE…QGFLLSYSQD (109 aa)). Residue N56 is glycosylated (N-linked (GlcNAc...) asparagine). N111 carries N-linked (GlcNAc...) asparagine glycosylation. In terms of domain architecture, LDL-receptor class A 1 spans 139–175 (MCLQEEFQCLNHRCVSAVQRCDGVDACGDGSDEAGCS). Intrachain disulfides connect C140–C152, C147–C165, C159–C174, and C192–C220. One can recognise a CUB 2 domain in the interval 192–305 (CNVTLEDFYG…RGFNATYHVR (114 aa)). N193 and N299 each carry an N-linked (GlcNAc...) asparagine glycan. LDL-receptor class A domains are found at residues 307–354 (YCLP…EDCP), 355–397 (GCPP…RRCR), and 398–434 (HCQP…WDCS). 9 disulfides stabilise this stretch: C308–C331, C315–C344, C338–C353, C356–C374, C363–C387, C381–C396, C399–C411, C406–C424, and C418–C433. The helical transmembrane segment at 441–461 (VITAAVIGSLVCGLLLVIALG) threads the bilayer. The Cytoplasmic segment spans residues 462-713 (CTCKLYAIRT…AEAEDEPLLT (252 aa)). Positions 564-637 (GLLPRTNTPA…SPAPTTVPEA (74 aa)) are disordered. Over residues 569 to 584 (TNTPARASEARSQVTP) the composition is skewed to polar residues. Phosphothreonine is present on T596. The segment covering 621–636 (PLPSASTSPAPTTVPE) has biased composition (low complexity).

Belongs to the LDLR family. Expressed in blood leukocyte, lung, placenta, small intestine, liver, kidney, spleen, thymus, colon, skeletal muscle and heart.

Its subcellular location is the membrane. The protein resides in the coated pit. Its function is as follows. Probable receptor, which is involved in the internalization of lipophilic molecules and/or signal transduction. May be involved in the uptake of lipoprotein APOE in liver. This Homo sapiens (Human) protein is Low-density lipoprotein receptor-related protein 10 (LRP10).